The sequence spans 399 residues: Tryptophan synthase beta chain (399 aa).

At Lys-92 the chain carries N6-(pyridoxal phosphate)lysine.

The protein belongs to the TrpB family. Tetramer of two alpha and two beta chains. Pyridoxal 5'-phosphate serves as cofactor.

It carries out the reaction (1S,2R)-1-C-(indol-3-yl)glycerol 3-phosphate + L-serine = D-glyceraldehyde 3-phosphate + L-tryptophan + H2O. The protein operates within amino-acid biosynthesis; L-tryptophan biosynthesis; L-tryptophan from chorismate: step 5/5. In terms of biological role, the beta subunit is responsible for the synthesis of L-tryptophan from indole and L-serine. The polypeptide is Tryptophan synthase beta chain (Legionella pneumophila (strain Paris)).